The sequence spans 208 residues: Small ribosomal subunit protein uS4 (208 aa).

Residues 98–158 (RRLDNVVYRL…EKSRKIACIN (61 aa)) form the S4 RNA-binding domain.

It belongs to the universal ribosomal protein uS4 family. Part of the 30S ribosomal subunit. Contacts protein S5. The interaction surface between S4 and S5 is involved in control of translational fidelity.

Functionally, one of the primary rRNA binding proteins, it binds directly to 16S rRNA where it nucleates assembly of the body of the 30S subunit. With S5 and S12 plays an important role in translational accuracy. The protein is Small ribosomal subunit protein uS4 of Geobacter metallireducens (strain ATCC 53774 / DSM 7210 / GS-15).